Here is a 588-residue protein sequence, read N- to C-terminus: Peptidoglycan D,D-transpeptidase FtsI (588 aa).

Residues 19–39 (FISWRFALLCGCILLALAFLL) form a helical membrane-spanning segment. Residue S307 is the Acyl-ester intermediate of the active site. A propeptide spanning residues 578-588 (INQGEGTGGRS) is cleaved from the precursor.

It belongs to the transpeptidase family. FtsI subfamily.

The protein resides in the cell inner membrane. The enzyme catalyses Preferential cleavage: (Ac)2-L-Lys-D-Ala-|-D-Ala. Also transpeptidation of peptidyl-alanyl moieties that are N-acyl substituents of D-alanine.. The protein operates within cell wall biogenesis; peptidoglycan biosynthesis. Catalyzes cross-linking of the peptidoglycan cell wall at the division septum. The chain is Peptidoglycan D,D-transpeptidase FtsI from Escherichia coli O157:H7.